The chain runs to 254 residues: Glycerol operon regulatory protein (254 aa).

Residues 5–67 (IQSLERAAAM…PASGRYQLGA (63 aa)) form the HTH iclR-type domain. A DNA-binding region (H-T-H motif) is located at residues 27-46 (LSDIASTLGLAKGTAHGILR). The 170-residue stretch at 82–251 (LRARALVWTD…AAAVSRDLGA (170 aa)) folds into the IclR-ED domain.

Its function is as follows. May be an activator protein for the gylABX operon. In Streptomyces griseus, this protein is Glycerol operon regulatory protein (gylR).